Consider the following 710-residue polypeptide: Assimilatory nitrate reductase catalytic subunit (710 aa).

Positions 19–77 (EKTYDTQCPFCSMQCKMQLVEQTIVTRKKYTAIGIDNPTTQGRLCIKGMNAHQHALNSS) constitute a 4Fe-4S Mo/W bis-MGD-type domain. [4Fe-4S] cluster contacts are provided by Cys-26, Cys-29, Cys-33, and Cys-63.

It belongs to the prokaryotic molybdopterin-containing oxidoreductase family. Requires [4Fe-4S] cluster as cofactor. It depends on Mo-bis(molybdopterin guanine dinucleotide) as a cofactor.

It functions in the pathway nitrogen metabolism; nitrate reduction (denitrification); dinitrogen from nitrate: step 1/4. Functionally, nitrate reductase is a key enzyme involved in the first step of nitrate assimilation in plants, fungi and bacteria. This is Assimilatory nitrate reductase catalytic subunit (nasC) from Bacillus subtilis (strain 168).